A 78-amino-acid polypeptide reads, in one-letter code: Large ribosomal subunit protein bL28 (78 aa).

Positions 1 to 20 are disordered; the sequence is MSRVCQVTGKGPVTGNNISH.

The protein belongs to the bacterial ribosomal protein bL28 family.

This chain is Large ribosomal subunit protein bL28, found in Stutzerimonas stutzeri (strain A1501) (Pseudomonas stutzeri).